Consider the following 163-residue polypeptide: Globin CTT-Z (163 aa).

Positions 1-16 are cleaved as a signal peptide; it reads MKFFAVLALCIVGAIA. The Globin domain occupies 18–162; sequence PLTSDEAALV…VYTAVFQIVT (145 aa). 2 residues coordinate heme b: H76 and H111.

The protein belongs to the globin family.

The polypeptide is Globin CTT-Z (CTT-Z) (Chironomus thummi piger (Midge)).